The sequence spans 408 residues: LL-diaminopimelate aminotransferase (408 aa).

Substrate contacts are provided by tyrosine 15 and glycine 42. Pyridoxal 5'-phosphate is bound by residues tyrosine 72, 108–109 (SK), tyrosine 132, asparagine 187, tyrosine 218, and 246–248 (SFS). Residues lysine 109, tyrosine 132, and asparagine 187 each contribute to the substrate site. At lysine 249 the chain carries N6-(pyridoxal phosphate)lysine. Arginine 257 and asparagine 292 together coordinate pyridoxal 5'-phosphate. Positions 292 and 388 each coordinate substrate.

The protein belongs to the class-I pyridoxal-phosphate-dependent aminotransferase family. LL-diaminopimelate aminotransferase subfamily. Homodimer. It depends on pyridoxal 5'-phosphate as a cofactor.

The catalysed reaction is (2S,6S)-2,6-diaminopimelate + 2-oxoglutarate = (S)-2,3,4,5-tetrahydrodipicolinate + L-glutamate + H2O + H(+). It participates in amino-acid biosynthesis; L-lysine biosynthesis via DAP pathway; LL-2,6-diaminopimelate from (S)-tetrahydrodipicolinate (aminotransferase route): step 1/1. Its function is as follows. Involved in the synthesis of meso-diaminopimelate (m-DAP or DL-DAP), required for both lysine and peptidoglycan biosynthesis. Catalyzes the direct conversion of tetrahydrodipicolinate to LL-diaminopimelate. The protein is LL-diaminopimelate aminotransferase of Synechococcus sp. (strain WH7803).